The primary structure comprises 287 residues: tRNA pseudouridine synthase B (287 aa).

Asp-38 (nucleophile) is an active-site residue.

It belongs to the pseudouridine synthase TruB family. Type 1 subfamily.

It carries out the reaction uridine(55) in tRNA = pseudouridine(55) in tRNA. Responsible for synthesis of pseudouridine from uracil-55 in the psi GC loop of transfer RNAs. This is tRNA pseudouridine synthase B from Fusobacterium nucleatum subsp. nucleatum (strain ATCC 25586 / DSM 15643 / BCRC 10681 / CIP 101130 / JCM 8532 / KCTC 2640 / LMG 13131 / VPI 4355).